The primary structure comprises 217 residues: uncharacterized protein (217 aa).

This is an uncharacterized protein from Homo sapiens (Human).